The primary structure comprises 441 residues: Glutamate--tRNA ligase 2 (441 aa).

The 'HIGH' region motif lies at 8–18 (PSPTGYIHVGN). The short motif at 239–243 (ALSKR) is the 'KMSKS' region element. ATP is bound at residue K242.

It belongs to the class-I aminoacyl-tRNA synthetase family. Glutamate--tRNA ligase type 1 subfamily. Monomer.

Its subcellular location is the cytoplasm. The catalysed reaction is tRNA(Glu) + L-glutamate + ATP = L-glutamyl-tRNA(Glu) + AMP + diphosphate. In terms of biological role, catalyzes the attachment of glutamate to tRNA(Glu) in a two-step reaction: glutamate is first activated by ATP to form Glu-AMP and then transferred to the acceptor end of tRNA(Glu). The protein is Glutamate--tRNA ligase 2 of Ruegeria sp. (strain TM1040) (Silicibacter sp.).